A 107-amino-acid polypeptide reads, in one-letter code: U1-lycotoxin-Ls1x (107 aa).

The signal sequence occupies residues 1 to 20 (MMKVLVVVALLVTLISYSSS). Residues 21–41 (EGIDDLEADELLSLMANEHPR) constitute a propeptide that is removed on maturation. Cystine bridges form between cysteine 44–cysteine 59, cysteine 51–cysteine 68, cysteine 58–cysteine 86, and cysteine 70–cysteine 84.

The protein belongs to the neurotoxin 19 (CSTX) family. 04 (U1-Lctx) subfamily. In terms of tissue distribution, expressed by the venom gland.

Its subcellular location is the secreted. The protein is U1-lycotoxin-Ls1x of Lycosa singoriensis (Wolf spider).